The sequence spans 375 residues: Terpene cyclase braA (375 aa).

Mg(2+) contacts are provided by D116, N264, and S268. Residues 116–120 (DDEID) carry the D(D/E)XX(D/E) motif motif. The NSE motif signature appears at 264–272 (NDVLSLQKE). The short motif at 348–355 (WSYSCERY) is the WxxxxxRY motif element. R354 and Y355 together coordinate (2E,6E)-farnesyl diphosphate.

It belongs to the terpene synthase family. As to quaternary structure, homodimer. Mg(2+) is required as a cofactor.

The enzyme catalyses (2E,6E)-farnesyl diphosphate + H2O = trichobrasilenol + diphosphate. It participates in secondary metabolite biosynthesis. Terpene cyclase; part of the gene cluster that mediates the biosynthesis of the brasilane terpene glycosides brasilane D and E. The biosynthesis starts with the activity of the terpene cyclase braA that converts farnesyl pyrophosphate into the sesquiterpene alcohol trichobrasilenol. Subsequently, trichobrasilenol is glycosylated by the O-glycosyltransferase braB putatively using UDP-GlcNAc as sugar donor to yield brasilane A. The latter then undergoes two rounds of oxidation performed by the cytochrome P450 monooxygenase braC. In the first round braC hydroxylates C-12 forming brasilane D, which serves as substrate in the second round to establish the epoxide at the bond between C-5 and C-10 and oxidize the alcohol at C-12 to an aldehyde leading to the final product brasilane E. This is Terpene cyclase braA from Annulohypoxylon truncatum (Hypoxylon truncatum).